Consider the following 1400-residue polypeptide: DNA-directed RNA polymerase subunit beta' (1400 aa).

Zn(2+) contacts are provided by Cys71, Cys73, Cys86, and Cys89. Mg(2+)-binding residues include Asp462, Asp464, and Asp466. Zn(2+) contacts are provided by Cys811, Cys885, Cys892, and Cys895.

It belongs to the RNA polymerase beta' chain family. The RNAP catalytic core consists of 2 alpha, 1 beta, 1 beta' and 1 omega subunit. When a sigma factor is associated with the core the holoenzyme is formed, which can initiate transcription. Requires Mg(2+) as cofactor. Zn(2+) serves as cofactor.

The catalysed reaction is RNA(n) + a ribonucleoside 5'-triphosphate = RNA(n+1) + diphosphate. In terms of biological role, DNA-dependent RNA polymerase catalyzes the transcription of DNA into RNA using the four ribonucleoside triphosphates as substrates. The polypeptide is DNA-directed RNA polymerase subunit beta' (Brucella anthropi (strain ATCC 49188 / DSM 6882 / CCUG 24695 / JCM 21032 / LMG 3331 / NBRC 15819 / NCTC 12168 / Alc 37) (Ochrobactrum anthropi)).